The following is a 346-amino-acid chain: uncharacterized protein (346 aa).

Residues 322-346 form a disordered region; sequence GRDGGYRETTSPPTGRGRNVRGSHA.

This is an uncharacterized protein from Mycobacterium tuberculosis (strain CDC 1551 / Oshkosh).